Consider the following 1348-residue polypeptide: Kinesin-like protein KIF7 (1348 aa).

In terms of domain architecture, Kinesin motor spans 15 to 349 (PVRVALRVRP…LNYASRAQNI (335 aa)). Residue 94–101 (GQTGSGKT) participates in ATP binding. Positions 358 to 479 (HPEAERVPEE…EDQAAQGTSG (122 aa)) are interaction with DLG5. The tract at residues 358 to 1211 (HPEAERVPEE…LGRHMWINQE (854 aa)) is interaction with SMO. 2 disordered regions span residues 451-486 (RSTL…DEGT) and 607-674 (AQAD…VCPE). Residues 480–542 (RKGDEGTQQL…ELRLRLELAQ (63 aa)) adopt a coiled-coil conformation. The span at 620–636 (SEEEGEEEEEEEEEEEE) shows a compositional bias: acidic residues. Coiled coils occupy residues 698-1057 (APAA…IEAL) and 1109-1211 (FDKV…INQE). Ser-903 is subject to Phosphoserine. 2 disordered regions span residues 1288–1314 (LCSE…VLPM) and 1328–1348 (KPRW…KNPL).

This sequence belongs to the TRAFAC class myosin-kinesin ATPase superfamily. Kinesin family. In terms of assembly, can form homodimers and interacts with microtubules. Interacts with GLI1 and SMO. Interacts with GLI2, GLI3 and SUFU. Interacts with NPHP1. Interacts with SMO and DLG5 (via PDZ4 or guanylate kinase-like domain). Post-translationally, polyubiquitinated by UBR3. As to expression, expressed in heart, lung, liver, kidney, testis, spleen and cerebellum.

It localises to the cell projection. It is found in the cilium. Its subcellular location is the cytoplasm. The protein resides in the cytoskeleton. The protein localises to the cilium basal body. Essential for hedgehog signaling regulation: acts both as a negative and a positive regulator of sonic hedgehog (Shh) and Indian hedgehog (Ihh) pathways, acting downstream of SMO, through both SUFU-dependent and -independent mechanisms. Involved in the regulation of microtubular dynamics. Required for proper organization of the ciliary tip and control of ciliary localization of SUFU-GLI2 complexes. Required for localization of GLI3 to cilia in response to Shh. Negatively regulates Shh signaling by preventing inappropriate activation of the transcriptional activator GLI2 in the absence of ligand. Positively regulates Shh signaling by preventing the processing of the transcription factor GLI3 into its repressor form. In keratinocytes, promotes the dissociation of SUFU-GLI2 complexes, GLI2 nuclear translocation and Shh signaling activation. Involved in the regulation of epidermal differentiation and chondrocyte development. In Mus musculus (Mouse), this protein is Kinesin-like protein KIF7 (Kif7).